Consider the following 332-residue polypeptide: MSVKEHLIHNVHKEEHGHAHNKITVVGVGAVGMACAISILMKDLADELALVDVVEDKLRGEMLDLQHGSLFLRTPKIVSGKDYSVTANSKLVIITAGARQQEGESRLNLVQRNVNIFKFIIPNVVKHSPDCKLLVVSNPVDIWTYVAWKISGFPKHRVIGSGCNLDSARFRYLMGERLGIHSLSCHGWIVGEHGDSSVPVWSGVNVAGVSLKALHPELGTDADKEHWKEVHKQVVDSAYEVIKLKGYTSWAIGLSVADLAETVMKNLRRVHPISTMVKGMYGIKDDVFLSVPCVLGYHGITDVVMMTLKSEEEEKLRKSADTLWGIQKELQF.

Residues 29-57 and Arg-99 contribute to the NAD(+) site; that span reads GAVG…VEDK. Positions 106, 138, and 169 each coordinate substrate. Asn-138 provides a ligand contact to NAD(+). His-193 serves as the catalytic Proton acceptor. Thr-248 serves as a coordination point for substrate.

Belongs to the LDH/MDH superfamily. LDH family. As to quaternary structure, homotetramer.

Its subcellular location is the cytoplasm. It carries out the reaction (S)-lactate + NAD(+) = pyruvate + NADH + H(+). Its pathway is fermentation; pyruvate fermentation to lactate; (S)-lactate from pyruvate: step 1/1. In terms of biological role, interconverts simultaneously and stereospecifically pyruvate and lactate with concomitant interconversion of NADH and NAD(+). This Alligator mississippiensis (American alligator) protein is L-lactate dehydrogenase A chain (LDHA).